We begin with the raw amino-acid sequence, 3658 residues long: Serine/threonine-protein kinase SMG1 (3658 aa).

2 disordered regions span residues 1–99 and 116–142; these read MSRR…TYGR and FTSV…MSYS. The span at 24-33 shows a compositional bias: polar residues; it reads NDWQPRTDSA. Basic and acidic residues-rich tracts occupy residues 67–84 and 127–136; these read QRHD…DEKG and ATKDMRKSQE. Lys171 carries the N6-acetyllysine modification. Residues 1281-1864 form the FAT domain; sequence RELQKSIEVQ…LYPAIVGTIS (584 aa). One copy of the HEAT repeat lies at 1815–1850; sequence APWRGIIPQLFSRLNHPEVYVRQSICNLLCRVAQDS. The tract at residues 1896 to 1917 is disordered; that stretch reads ECEGGSPPASQDSNKDEPKSGL. A PI3K/PI4K catalytic domain is found at 2122–2461; that stretch reads VGGTITILPT…MEREITRSLF (340 aa). Positions 2128-2134 are G-loop; it reads ILPTKTK. The segment at 2330–2338 is catalytic loop; it reads GLGDRHLDN. Residues 2350 to 2374 form an activation loop region; the sequence is HIDYNVCFEKGKSLRVPEKVPFRMT. Phosphothreonine is present on Thr3547. Phosphoserine is present on residues Ser3553 and Ser3567. Residues 3565–3576 show a composition bias toward polar residues; sequence ATSADTPPSTIP. The disordered stretch occupies residues 3565–3588; it reads ATSADTPPSTIPGTGKSIACSPKK. 2 positions are modified to phosphothreonine: Thr3570 and Thr3574. The FATC domain maps to 3626–3658; the sequence is RRMSVAEQVDYVIKEATNLDNLAQLYEGWTAWV.

The protein belongs to the PI3/PI4-kinase family. As to quaternary structure, component of the SMG1C complex composed of SMG1, SMG8 and SMG9; the recruitment of SMG8 to SMG1 N-terminus induces a large conformational change in the SMG1 C-terminal head domain containing the catalytic domain. Component of the transient SURF (SMG1-UPF1-eRF1-eRF3) complex. Part of a complex composed of SMG1, DHX34 and UPF1; within the complex DHX34 acts as a scaffolding protein to facilitate SMG1 phosphorylation of UPF1. Interacts with PRKCI. Interacts with TELO2 and TTI1. Interacts with RUVBL1 and RUVBL2. Interacts with DHX34 (via C-terminus); the interaction is RNA-independent. Requires Mn(2+) as cofactor. Autophosphorylated.

The protein localises to the nucleus. It is found in the cytoplasm. It carries out the reaction L-seryl-[protein] + ATP = O-phospho-L-seryl-[protein] + ADP + H(+). The enzyme catalyses L-threonyl-[protein] + ATP = O-phospho-L-threonyl-[protein] + ADP + H(+). Inhibited by caffeine, LY294002 and wortmannin. Its function is as follows. Serine/threonine protein kinase involved in both mRNA surveillance and genotoxic stress response pathways. Recognizes the substrate consensus sequence [ST]-Q. Plays a central role in nonsense-mediated decay (NMD) of mRNAs containing premature stop codons by phosphorylating UPF1/RENT1. Recruited by release factors to stalled ribosomes together with SMG8 and SMG9 (forming the SMG1C protein kinase complex), and UPF1 to form the transient SURF (SMG1-UPF1-eRF1-eRF3) complex. In EJC-dependent NMD, the SURF complex associates with the exon junction complex (EJC) through UPF2 and allows the formation of an UPF1-UPF2-UPF3 surveillance complex which is believed to activate NMD. Also acts as a genotoxic stress-activated protein kinase that displays some functional overlap with ATM. Can phosphorylate p53/TP53 and is required for optimal p53/TP53 activation after cellular exposure to genotoxic stress. Its depletion leads to spontaneous DNA damage and increased sensitivity to ionizing radiation (IR). May activate PRKCI but not PRKCZ. In Mus musculus (Mouse), this protein is Serine/threonine-protein kinase SMG1.